The chain runs to 152 residues: Xanthine-guanine phosphoribosyltransferase (152 aa).

5-phospho-alpha-D-ribose 1-diphosphate contacts are provided by residues 37 to 38, Arg69, and 88 to 96; these read RG and DDLVDTGGT. Arg69 lines the GMP pocket. Asp89 contacts Mg(2+). Residues Asp92 and Ile135 each coordinate guanine. Positions 92 and 135 each coordinate xanthine. GMP contacts are provided by residues 92 to 96 and 134 to 135; these read DTGGT and WI.

This sequence belongs to the purine/pyrimidine phosphoribosyltransferase family. XGPT subfamily. As to quaternary structure, homotetramer. It depends on Mg(2+) as a cofactor.

It localises to the cell inner membrane. It catalyses the reaction GMP + diphosphate = guanine + 5-phospho-alpha-D-ribose 1-diphosphate. The enzyme catalyses XMP + diphosphate = xanthine + 5-phospho-alpha-D-ribose 1-diphosphate. It carries out the reaction IMP + diphosphate = hypoxanthine + 5-phospho-alpha-D-ribose 1-diphosphate. It participates in purine metabolism; GMP biosynthesis via salvage pathway; GMP from guanine: step 1/1. Its pathway is purine metabolism; XMP biosynthesis via salvage pathway; XMP from xanthine: step 1/1. In terms of biological role, purine salvage pathway enzyme that catalyzes the transfer of the ribosyl-5-phosphate group from 5-phospho-alpha-D-ribose 1-diphosphate (PRPP) to the N9 position of the 6-oxopurines guanine and xanthine to form the corresponding ribonucleotides GMP (guanosine 5'-monophosphate) and XMP (xanthosine 5'-monophosphate), with the release of PPi. To a lesser extent, also acts on hypoxanthine. The protein is Xanthine-guanine phosphoribosyltransferase of Yersinia pseudotuberculosis serotype O:1b (strain IP 31758).